A 1323-amino-acid chain; its full sequence is Inositol hexakisphosphate and diphosphoinositol-pentakisphosphate kinase (1323 aa).

26-27 (RK) provides a ligand contact to substrate. ATP contacts are provided by residues Arg-109, Lys-162, His-169, Arg-188, 212-215 (EEFI), and 221-223 (DVK). 188–189 (RK) lines the substrate pocket. Lys-223 and Arg-237 together coordinate substrate. ATP-binding positions include Asp-284 and 296-298 (DVN). 301-304 (SFVK) provides a ligand contact to substrate. Residues 355 to 426 (TTPSGKLAEL…VLELARALVI (72 aa)) form a polyphosphoinositide-binding domain region. 2 stretches are compositionally biased toward polar residues: residues 933–947 (FNLSTNPKPATSSRS) and 977–992 (VTPTQLSTPSVTNDDL). Disordered stretches follow at residues 933 to 1022 (FNLS…SEDD), 1043 to 1107 (AMAD…GGGK), and 1134 to 1155 (IVIPTPVPSTTTAVVEDEASER). Positions 993 to 1006 (SISSNAESTAAEST) are enriched in low complexity. The segment covering 1062-1074 (KSMEEGDKPHGEW) has biased composition (basic and acidic residues). A compositionally biased stretch (low complexity) spans 1090–1101 (SNEMESNNESME).

Belongs to the histidine acid phosphatase family. VIP1 subfamily.

It is found in the cytoplasm. It localises to the cytosol. The enzyme catalyses 1D-myo-inositol hexakisphosphate + ATP = 1-diphospho-1D-myo-inositol 2,3,4,5,6-pentakisphosphate + ADP. It carries out the reaction 5-diphospho-1D-myo-inositol 1,2,3,4,6-pentakisphosphate + ATP + H(+) = 1,5-bis(diphospho)-1D-myo-inositol 2,3,4,6-tetrakisphosphate + ADP. Bifunctional inositol kinase that acts in concert with the IP6K kinases to synthesize the diphosphate group-containing inositol pyrophosphates diphosphoinositol pentakisphosphate, PP-InsP5, and bis-diphosphoinositol tetrakisphosphate, (PP)2-InsP4. PP-InsP5 and (PP)2-InsP4, also respectively called InsP7 and InsP8, may regulate a variety of cellular processes, including apoptosis, vesicle trafficking, cytoskeletal dynamics, and exocytosis. Phosphorylates inositol hexakisphosphate (InsP6) at position 1 to produce PP-InsP5 which is in turn phosphorylated by IP6Ks to produce (PP)2-InsP4. Alternatively, phosphorylates PP-InsP5 at position 1, produced by IP6Ks from InsP6, to produce (PP)2-InsP4. This is Inositol hexakisphosphate and diphosphoinositol-pentakisphosphate kinase from Caenorhabditis elegans.